Here is a 176-residue protein sequence, read N- to C-terminus: Endothelin-2 (176 aa).

Residues 1–22 form the signal peptide; the sequence is MVSPAWCSIALALLLALHEGKG. A propeptide spanning residues 23–44 is cleaved from the precursor; the sequence is QAAATMEQPASAPKGRGPHLRF. 2 cysteine pairs are disulfide-bonded: C47–C61 and C49–C57. The propeptide occupies 68 to 176; sequence VNTAGQTAPY…IPAHSRRRKR (109 aa). Residues 94-109 are endothelin-like; sequence CECSSAGDSACATFCH.

It belongs to the endothelin/sarafotoxin family.

The protein localises to the secreted. Functionally, vasoconstrictor. This chain is Endothelin-2 (Edn2), found in Rattus norvegicus (Rat).